We begin with the raw amino-acid sequence, 305 residues long: UDP-3-O-acyl-N-acetylglucosamine deacetylase (305 aa).

His79, His238, and Asp242 together coordinate Zn(2+). The Proton donor role is filled by His265.

This sequence belongs to the LpxC family. It depends on Zn(2+) as a cofactor.

It catalyses the reaction a UDP-3-O-[(3R)-3-hydroxyacyl]-N-acetyl-alpha-D-glucosamine + H2O = a UDP-3-O-[(3R)-3-hydroxyacyl]-alpha-D-glucosamine + acetate. It functions in the pathway glycolipid biosynthesis; lipid IV(A) biosynthesis; lipid IV(A) from (3R)-3-hydroxytetradecanoyl-[acyl-carrier-protein] and UDP-N-acetyl-alpha-D-glucosamine: step 2/6. Catalyzes the hydrolysis of UDP-3-O-myristoyl-N-acetylglucosamine to form UDP-3-O-myristoylglucosamine and acetate, the committed step in lipid A biosynthesis. The sequence is that of UDP-3-O-acyl-N-acetylglucosamine deacetylase from Citrobacter koseri (strain ATCC BAA-895 / CDC 4225-83 / SGSC4696).